The sequence spans 762 residues: LON peptidase N-terminal domain and RING finger protein 1 (762 aa).

The disordered stretch occupies residues 1-35 (MSSPAVARASPGGNREASGGPRSRNGPWEVGGGGE). A TPR 1 repeat occupies 47–80 (WELLLRRGELLALGGHLKGALEAFAAALRRGAPA). An RING-type 1 zinc finger spans residues 118–154 (CLSCRGFLSEPVTVPCGHSYCRRCLRRELRARCRLCR). 3 TPR repeats span residues 201–233 (ARAAGRLGELLHEGRYREALAAACDALRAEPSD), 235–267 (TLKIYRAESYAGLQEFKAALEDLNAVLFQLPNW), and 268–301 (PEVYFRKGKVLQDAGFLGDALQLFLQCLALDEDF). Serine 420 bears the Phosphoserine mark. The segment at 468–506 (CSLCMRLFFEPVTTPCGHSFCKNCLERCLDHAPYCPLCK) adopts an RING-type 2 zinc-finger fold. One can recognise a Lon N-terminal domain in the interval 547–757 (TAELSHLTKN…KIQHILTYFS (211 aa)).

The polypeptide is LON peptidase N-terminal domain and RING finger protein 1 (Lonrf1) (Mus musculus (Mouse)).